A 298-amino-acid polypeptide reads, in one-letter code: MQDFSSLLLKLQEYWKNQGCLVIQPYDIPAGAGTFHPATLLRSLDKKPWNVAYVAPSRRPTDGRYGENPNRLGSYYQFQVVIKPSPSNIQEMYLKSLEVLGINLNEHDIRFVEDNWESPTLGAWGLGWEVWLDGMEVTQFTYFQQVGGIPCSPIPVEITYGLERLAMYVQKVENILEIEWAKNNHDSVRYAQVHLESEYQFSKYHFEIASVRRLLEMFKNAQAEALHCLENKLPLPAYDFVMLCSHFFNILDARKAISVAERQNYILQIRDLAKGCAVLYKEQEKEREERLKNALTKA.

Belongs to the class-II aminoacyl-tRNA synthetase family. As to quaternary structure, tetramer of two alpha and two beta subunits.

The protein localises to the cytoplasm. It catalyses the reaction tRNA(Gly) + glycine + ATP = glycyl-tRNA(Gly) + AMP + diphosphate. This Helicobacter pylori (strain HPAG1) protein is Glycine--tRNA ligase alpha subunit.